A 447-amino-acid chain; its full sequence is Chordin-like protein 1 (447 aa).

The signal sequence occupies residues 1-22 (MDGMKYIISLFFIFVFLEGSKT). VWFC domains lie at 30–95 (TYCV…PRCP) and 108–174 (KSCE…RVCR). A glycan (N-linked (GlcNAc...) asparagine) is linked at Asn-113. Positions 174–176 (RGD) match the Cell attachment site motif. The segment at 200 to 224 (SYLRSPYDPPPNRQAGGLPRFPGSR) is disordered. One can recognise a VWFC 3 domain in the interval 253–318 (QVCVSNGKTY…IDGKCCKVCP (66 aa)). Asn-286 is a glycosylation site (N-linked (GlcNAc...) asparagine).

Post-translationally, may be glycosylated. Expressed in heart, brain, lung, liver, kidney and testis.

It is found in the secreted. Its function is as follows. Seems to antagonize the function of BMP4 by binding to it and preventing its interaction with receptors. Alters the fate commitment of neural stem cells from gliogenesis to neurogenesis. Contributes to neuronal differentiation of neural stem cells in the brain by preventing the adoption of a glial fate. May play a crucial role in dorsoventral axis formation. Antagonizes the function of BMP7 and may thus play an important role in the embryonic bone formation. Shows no inhibitory effect on the inducing activity of BMP2. Plays a role during anterior segment eye development. The sequence is that of Chordin-like protein 1 (Chrdl1) from Mus musculus (Mouse).